Here is a 170-residue protein sequence, read N- to C-terminus: Ribosome maturation factor RimM (170 aa).

In terms of domain architecture, PRC barrel spans 98–170; the sequence is PDEYYWVDLE…LIVVDWDPDF (73 aa).

The protein belongs to the RimM family. Binds ribosomal protein uS19.

The protein localises to the cytoplasm. Functionally, an accessory protein needed during the final step in the assembly of 30S ribosomal subunit, possibly for assembly of the head region. Essential for efficient processing of 16S rRNA. May be needed both before and after RbfA during the maturation of 16S rRNA. It has affinity for free ribosomal 30S subunits but not for 70S ribosomes. This chain is Ribosome maturation factor RimM, found in Xanthomonas axonopodis pv. citri (strain 306).